A 575-amino-acid chain; its full sequence is Transcription factor COE2 (575 aa).

An interaction with DNA region spans residues 62–65 (RKSN). A C5-type zinc finger spans residues 150–169 (CRVLLTHEVMCSRCCEKKSC). Interaction with DNA stretches follow at residues 196–203 (NCLKTAGN) and 235–238 (NNSK). An IPT/TIG domain is found at 253 to 336 (PCIKAISPSE…KGAPGRFIYT (84 aa)). A compositionally biased stretch (polar residues) spans 441–453 (STQGNNQGYIRNT). The tract at residues 441 to 479 (STQGNNQGYIRNTSSISPRGYSSSSTPQQSNYSTSSNSM) is disordered. Positions 454-479 (SSISPRGYSSSSTPQQSNYSTSSNSM) are enriched in low complexity.

The protein belongs to the COE family. As to quaternary structure, forms either a homodimer or a heterodimer with a related family member. Interacts with SIX1.

The protein localises to the nucleus. Its function is as follows. Transcription factor that, in osteoblasts, activates the decoy receptor for RANKL, TNFRSF11B, which in turn regulates osteoclast differentiation. Acts in synergy with the Wnt-responsive LEF1/CTNNB1 pathway. Recognizes variations of the palindromic sequence 5'-ATTCCCNNGGGAATT-3'. This chain is Transcription factor COE2 (EBF2), found in Bos taurus (Bovine).